Reading from the N-terminus, the 445-residue chain is Phosphoglucosamine mutase 1 (445 aa).

Ser-102 functions as the Phosphoserine intermediate in the catalytic mechanism. Residues Ser-102, Asp-241, Asp-243, and Asp-245 each coordinate Mg(2+). A Phosphoserine modification is found at Ser-102.

Belongs to the phosphohexose mutase family. Requires Mg(2+) as cofactor. In terms of processing, activated by phosphorylation.

The enzyme catalyses alpha-D-glucosamine 1-phosphate = D-glucosamine 6-phosphate. Catalyzes the conversion of glucosamine-6-phosphate to glucosamine-1-phosphate. This Shewanella amazonensis (strain ATCC BAA-1098 / SB2B) protein is Phosphoglucosamine mutase 1.